Reading from the N-terminus, the 110-residue chain is Protein YcgL (110 aa).

The YcgL domain occupies 14–98 (MFCVIYRSSK…PPEDLLKQHL (85 aa)). Positions 87-110 (PPPPEDLLKQHLSSVGQNTSPADR) are disordered. Positions 97-110 (HLSSVGQNTSPADR) are enriched in polar residues.

The sequence is that of Protein YcgL from Salmonella choleraesuis (strain SC-B67).